Reading from the N-terminus, the 159-residue chain is NADH-quinone oxidoreductase subunit I (159 aa).

4Fe-4S ferredoxin-type domains are found at residues 51 to 80 (RRYE…IEAD) and 90 to 119 (TRYD…EGPN). Cys-60, Cys-63, Cys-66, Cys-70, Cys-99, Cys-102, Cys-105, and Cys-109 together coordinate [4Fe-4S] cluster.

This sequence belongs to the complex I 23 kDa subunit family. In terms of assembly, NDH-1 is composed of 14 different subunits. Subunits NuoA, H, J, K, L, M, N constitute the membrane sector of the complex. The cofactor is [4Fe-4S] cluster.

The protein resides in the cell inner membrane. It carries out the reaction a quinone + NADH + 5 H(+)(in) = a quinol + NAD(+) + 4 H(+)(out). Its function is as follows. NDH-1 shuttles electrons from NADH, via FMN and iron-sulfur (Fe-S) centers, to quinones in the respiratory chain. The immediate electron acceptor for the enzyme in this species is believed to be ubiquinone. Couples the redox reaction to proton translocation (for every two electrons transferred, four hydrogen ions are translocated across the cytoplasmic membrane), and thus conserves the redox energy in a proton gradient. In Rickettsia bellii (strain OSU 85-389), this protein is NADH-quinone oxidoreductase subunit I.